The chain runs to 541 residues: RING finger protein 37 (541 aa).

In terms of domain architecture, U-box spans 258-338; it reads DVPEEFLDPI…DHFLLQHSIP (81 aa). Arg-451 bears the Asymmetric dimethylarginine mark. Residues 483-528 form an RING-type zinc finger; the sequence is CASCKRVFSPYFKKEPVYQLPCGHLLCRPCLGEKQRSLPMTCTACQ.

As to quaternary structure, interacts with UBE2L3. Interacts with VCP. As to expression, expressed in liver, heart, brain, kidney and testis.

It localises to the nucleus. The catalysed reaction is S-ubiquitinyl-[E2 ubiquitin-conjugating enzyme]-L-cysteine + [acceptor protein]-L-lysine = [E2 ubiquitin-conjugating enzyme]-L-cysteine + N(6)-ubiquitinyl-[acceptor protein]-L-lysine.. The protein operates within protein modification; protein ubiquitination. In terms of biological role, may have a ubiquitin-protein ligase activity acting as an E3 ubiquitin-protein ligase or as a ubiquitin-ubiquitin ligase promoting elongation of ubiquitin chains on substrates. The protein is RING finger protein 37 of Homo sapiens (Human).